The chain runs to 319 residues: NH(3)-dependent NAD(+) synthetase (319 aa).

G33–S40 provides a ligand contact to ATP. Residue D39 participates in Mg(2+) binding. R169 contributes to the deamido-NAD(+) binding site. T189 provides a ligand contact to ATP. E194 is a binding site for Mg(2+). The deamido-NAD(+) site is built by K202 and D209. The ATP site is built by K218 and T240.

This sequence belongs to the NAD synthetase family. Homodimer.

The enzyme catalyses deamido-NAD(+) + NH4(+) + ATP = AMP + diphosphate + NAD(+) + H(+). The protein operates within cofactor biosynthesis; NAD(+) biosynthesis; NAD(+) from deamido-NAD(+) (ammonia route): step 1/1. Catalyzes the ATP-dependent amidation of deamido-NAD to form NAD. Uses ammonia as a nitrogen source. The sequence is that of NH(3)-dependent NAD(+) synthetase from Mesorhizobium japonicum (strain LMG 29417 / CECT 9101 / MAFF 303099) (Mesorhizobium loti (strain MAFF 303099)).